Here is a 348-residue protein sequence, read N- to C-terminus: Holliday junction branch migration complex subunit RuvB (348 aa).

Residues 1-183 form a large ATPase domain (RuvB-L) region; it reads MTEASRIVAP…FGIPVRLNFY (183 aa). Residues leucine 22, arginine 23, glycine 64, lysine 67, threonine 68, threonine 69, 130-132, arginine 173, tyrosine 183, and arginine 220 each bind ATP; that span reads EDF. Mg(2+) is bound at residue threonine 68. The tract at residues 184 to 254 is small ATPAse domain (RuvB-S); sequence TEDELEKIVS…VADHALGALE (71 aa). The segment at 257 to 348 is head domain (RuvB-H); sequence AAGLDAMDRR…SGLFGQDEDR (92 aa). 3 residues coordinate DNA: arginine 293, arginine 312, and arginine 317. The disordered stretch occupies residues 329 to 348; the sequence is LTEPSRDPAQSGLFGQDEDR.

It belongs to the RuvB family. In terms of assembly, homohexamer. Forms an RuvA(8)-RuvB(12)-Holliday junction (HJ) complex. HJ DNA is sandwiched between 2 RuvA tetramers; dsDNA enters through RuvA and exits via RuvB. An RuvB hexamer assembles on each DNA strand where it exits the tetramer. Each RuvB hexamer is contacted by two RuvA subunits (via domain III) on 2 adjacent RuvB subunits; this complex drives branch migration. In the full resolvosome a probable DNA-RuvA(4)-RuvB(12)-RuvC(2) complex forms which resolves the HJ.

It localises to the cytoplasm. It carries out the reaction ATP + H2O = ADP + phosphate + H(+). Its function is as follows. The RuvA-RuvB-RuvC complex processes Holliday junction (HJ) DNA during genetic recombination and DNA repair, while the RuvA-RuvB complex plays an important role in the rescue of blocked DNA replication forks via replication fork reversal (RFR). RuvA specifically binds to HJ cruciform DNA, conferring on it an open structure. The RuvB hexamer acts as an ATP-dependent pump, pulling dsDNA into and through the RuvAB complex. RuvB forms 2 homohexamers on either side of HJ DNA bound by 1 or 2 RuvA tetramers; 4 subunits per hexamer contact DNA at a time. Coordinated motions by a converter formed by DNA-disengaged RuvB subunits stimulates ATP hydrolysis and nucleotide exchange. Immobilization of the converter enables RuvB to convert the ATP-contained energy into a lever motion, pulling 2 nucleotides of DNA out of the RuvA tetramer per ATP hydrolyzed, thus driving DNA branch migration. The RuvB motors rotate together with the DNA substrate, which together with the progressing nucleotide cycle form the mechanistic basis for DNA recombination by continuous HJ branch migration. Branch migration allows RuvC to scan DNA until it finds its consensus sequence, where it cleaves and resolves cruciform DNA. This chain is Holliday junction branch migration complex subunit RuvB, found in Nitrobacter winogradskyi (strain ATCC 25391 / DSM 10237 / CIP 104748 / NCIMB 11846 / Nb-255).